The sequence spans 210 residues: Superoxide dismutase [Mn], mitochondrial (210 aa).

Positions 29, 77, 164, and 168 each coordinate Mn(2+).

The protein belongs to the iron/manganese superoxide dismutase family. In terms of assembly, homotetramer. Mn(2+) serves as cofactor.

It is found in the mitochondrion matrix. The enzyme catalyses 2 superoxide + 2 H(+) = H2O2 + O2. Its function is as follows. Destroys superoxide anion radicals which are normally produced within the cells and which are toxic to biological systems. The sequence is that of Superoxide dismutase [Mn], mitochondrial (sodB) from Aspergillus niger.